Reading from the N-terminus, the 372-residue chain is tRNA-specific 2-thiouridylase MnmA (372 aa).

Residues 11-18 and Met37 contribute to the ATP site; that span reads GMSGGVDS. The segment at 97 to 99 is interaction with target base in tRNA; the sequence is NPD. Cys102 (nucleophile) is an active-site residue. Cysteines 102 and 199 form a disulfide. Gly126 is a binding site for ATP. The interaction with tRNA stretch occupies residues 149–151; the sequence is KDQ. Residue Cys199 is the Cysteine persulfide intermediate of the active site. Residues 309 to 310 form an interaction with tRNA region; it reads RY.

Belongs to the MnmA/TRMU family.

Its subcellular location is the cytoplasm. It catalyses the reaction S-sulfanyl-L-cysteinyl-[protein] + uridine(34) in tRNA + AH2 + ATP = 2-thiouridine(34) in tRNA + L-cysteinyl-[protein] + A + AMP + diphosphate + H(+). In terms of biological role, catalyzes the 2-thiolation of uridine at the wobble position (U34) of tRNA, leading to the formation of s(2)U34. This Staphylococcus aureus (strain bovine RF122 / ET3-1) protein is tRNA-specific 2-thiouridylase MnmA.